Consider the following 214-residue polypeptide: Pyridoxine/pyridoxamine 5'-phosphate oxidase (214 aa).

Substrate is bound by residues 9–12 (RKDY) and Lys-67. FMN-binding positions include 62–67 (RMVLLK), 77–78 (FT), Arg-83, Lys-84, and Gln-106. Substrate contacts are provided by Tyr-124, Arg-128, and Ser-132. FMN contacts are provided by residues 141–142 (QS) and Trp-186. A substrate-binding site is contributed by 192–194 (RLH). Arg-196 provides a ligand contact to FMN.

The protein belongs to the pyridoxamine 5'-phosphate oxidase family. In terms of assembly, homodimer. It depends on FMN as a cofactor.

It catalyses the reaction pyridoxamine 5'-phosphate + O2 + H2O = pyridoxal 5'-phosphate + H2O2 + NH4(+). It carries out the reaction pyridoxine 5'-phosphate + O2 = pyridoxal 5'-phosphate + H2O2. It functions in the pathway cofactor metabolism; pyridoxal 5'-phosphate salvage; pyridoxal 5'-phosphate from pyridoxamine 5'-phosphate: step 1/1. It participates in cofactor metabolism; pyridoxal 5'-phosphate salvage; pyridoxal 5'-phosphate from pyridoxine 5'-phosphate: step 1/1. Functionally, catalyzes the oxidation of either pyridoxine 5'-phosphate (PNP) or pyridoxamine 5'-phosphate (PMP) into pyridoxal 5'-phosphate (PLP). In Nostoc sp. (strain PCC 7120 / SAG 25.82 / UTEX 2576), this protein is Pyridoxine/pyridoxamine 5'-phosphate oxidase.